The chain runs to 394 residues: Elongation factor Tu (394 aa).

In terms of domain architecture, tr-type G spans 10-204 (KPHVNVGTIG…HLDTYIPEPE (195 aa)). A G1 region spans residues 19–26 (GHVDHGKT). Residue 19 to 26 (GHVDHGKT) coordinates GTP. T26 serves as a coordination point for Mg(2+). A G2 region spans residues 60–64 (GITIN). The segment at 81–84 (DCPG) is G3. Residues 81–85 (DCPGH) and 136–139 (NKCD) contribute to the GTP site. Residues 136–139 (NKCD) are G4. Residues 174–176 (SAL) form a G5 region.

The protein belongs to the TRAFAC class translation factor GTPase superfamily. Classic translation factor GTPase family. EF-Tu/EF-1A subfamily. Monomer.

The protein localises to the cytoplasm. The catalysed reaction is GTP + H2O = GDP + phosphate + H(+). In terms of biological role, GTP hydrolase that promotes the GTP-dependent binding of aminoacyl-tRNA to the A-site of ribosomes during protein biosynthesis. The protein is Elongation factor Tu of Klebsiella pneumoniae subsp. pneumoniae (strain ATCC 700721 / MGH 78578).